The chain runs to 100 residues: Small ribosomal subunit protein uS14c (100 aa).

Belongs to the universal ribosomal protein uS14 family. As to quaternary structure, part of the 30S ribosomal subunit.

It is found in the plastid. Its subcellular location is the chloroplast. Its function is as follows. Binds 16S rRNA, required for the assembly of 30S particles. This Lobularia maritima (Sweet alyssum) protein is Small ribosomal subunit protein uS14c.